We begin with the raw amino-acid sequence, 139 residues long: Protein Turandot B (139 aa).

The N-terminal stretch at 1 to 21 (MNFNMSMICFALLLIVTLCSA) is a signal peptide.

Belongs to the Turandot family.

It localises to the secreted. A humoral factor that may play a role in stress tolerance. This is Protein Turandot B from Drosophila yakuba (Fruit fly).